Consider the following 43-residue polypeptide: S-layer protein 1 (43 aa).

Its subcellular location is the secreted. It is found in the cell wall. The protein localises to the S-layer. Functionally, the S-layer is a paracrystalline mono-layered assembly of proteins which coat the surface of bacteria. This chain is S-layer protein 1, found in Bacillus thuringiensis subsp. konkukian.